Reading from the N-terminus, the 195-residue chain is CASP-like protein 1B1 (195 aa).

Over 1–25 (MDLEKGKKPSEQAAACRIMQVKDKL) the chain is Cytoplasmic. The chain crosses the membrane as a helical span at residues 26-46 (ITLQPVVRACVFLATAVAAVI). Over 47–78 (MGLNKQSYTTVVAIVGTRPVTQTFTAKFKDTP) the chain is Extracellular. A helical membrane pass occupies residues 79 to 99 (AFVFFVIANAIASGYNLMVLV). Residues 100–114 (TRRILQRRAQSLSVH) lie on the Cytoplasmic side of the membrane. A helical membrane pass occupies residues 115 to 135 (LLDMVILTLLATGSATAASMA). Over 136-160 (QLGKNGNLHARWNPICDKFGSFCNH) the chain is Extracellular. A helical membrane pass occupies residues 161–181 (GGIALMSSFIGVALMLALNLL). The Cytoplasmic segment spans residues 182-195 (SAAANSPRSNVTGQ).

It belongs to the Casparian strip membrane proteins (CASP) family. Homodimer and heterodimers.

It localises to the cell membrane. In Oryza sativa subsp. indica (Rice), this protein is CASP-like protein 1B1.